A 198-amino-acid chain; its full sequence is Potassium-transporting ATPase KdpC subunit (198 aa).

The chain crosses the membrane as a helical span at residues 8-28 (ILAVLVFTILCGIIYPVSTTV).

Belongs to the KdpC family. As to quaternary structure, the system is composed of three essential subunits: KdpA, KdpB and KdpC.

It localises to the cell membrane. Part of the high-affinity ATP-driven potassium transport (or Kdp) system, which catalyzes the hydrolysis of ATP coupled with the electrogenic transport of potassium into the cytoplasm. This subunit acts as a catalytic chaperone that increases the ATP-binding affinity of the ATP-hydrolyzing subunit KdpB by the formation of a transient KdpB/KdpC/ATP ternary complex. The sequence is that of Potassium-transporting ATPase KdpC subunit from Clostridium perfringens (strain ATCC 13124 / DSM 756 / JCM 1290 / NCIMB 6125 / NCTC 8237 / Type A).